The primary structure comprises 579 residues: MFS-type transporter sphD (579 aa).

The tract at residues Ser-17–Arg-62 is disordered. Over residues Pro-51–Arg-62 the composition is skewed to basic and acidic residues. Helical transmembrane passes span Ala-73–Ile-93, Phe-110–Ile-130, Pro-138–Gln-158, Val-168–Met-188, Leu-200–Ala-220, Trp-227–Leu-247, Trp-267–Ala-287, and Gly-294–Phe-314. N-linked (GlcNAc...) asparagine glycosylation is present at Asn-335. The next 6 helical transmembrane spans lie at Leu-338–Ile-358, Ala-367–Leu-391, Tyr-398–Phe-419, Leu-429–Met-449, Gly-460–Ile-480, and Phe-541–Phe-561.

Belongs to the major facilitator superfamily.

It is found in the membrane. MFS-type transporter; part of the gene cluster that mediates the biosynthesis of sphingofungins, bioactive molecules acting as sphingolipid inhibitors via inhibiting serine palmitoyl transferase (SPT). This Aspergillus fumigatus (strain CBS 144.89 / FGSC A1163 / CEA10) (Neosartorya fumigata) protein is MFS-type transporter sphD.